Reading from the N-terminus, the 98-residue chain is ORF9b protein (98 aa).

One can recognise a 9b domain in the interval 9 to 98 (VPPALHLVDP…PDEFVVVTAK (90 aa)). The Nuclear export signal motif lies at 46-54 (ILRLGSQLS).

The protein belongs to the coronavirus group 2 protein 9b family. In terms of assembly, homodimer. Interacts with host XPO1; this interaction mediates protein ORF9b export out of the nucleus. Interacts with host MAVS. Interacts with protein ORF6.

It is found in the virion. It localises to the host cytoplasmic vesicle membrane. The protein resides in the host cytoplasm. The protein localises to the host endoplasmic reticulum. Its subcellular location is the host nucleus. It is found in the host mitochondrion. Plays a role in the inhibition of host innate immune response by targeting the mitochondrial-associated adapter MAVS. Mechanistically, usurps the E3 ligase ITCH to trigger the degradation of MAVS, TRAF3, and TRAF6. In addition, causes mitochondrial elongation by triggering ubiquitination and proteasomal degradation of dynamin-like protein 1/DNM1L. The chain is ORF9b protein from Homo sapiens (Human).